A 130-amino-acid chain; its full sequence is Serum amyloid A-4 protein (130 aa).

An N-terminal signal peptide occupies residues 1–18 (MRLATVIVLCSLFLGVSG). The segment at 109–130 (EEWGRSGKNPNHFRPEGLPEKF) is disordered. Basic and acidic residues predominate over residues 121–130 (FRPEGLPEKF).

This sequence belongs to the SAA family. As to quaternary structure, apolipoprotein of the HDL complex. In terms of tissue distribution, expressed by the liver; secreted in plasma.

The protein localises to the secreted. In terms of biological role, major acute phase reactant. The chain is Serum amyloid A-4 protein from Mus musculus (Mouse).